Consider the following 867-residue polypeptide: GATOR2 complex protein Mio (867 aa).

WD repeat units lie at residues 51-86 (ANES…GICN), 100-144 (RQQR…PKET), 149-188 (GVGE…ATCQ), 190-228 (IQTK…SPLR), and 231-272 (QSSK…TDNS). Positions 350–376 (PASPTSTAATPTQQQPTSSCSTNSGSS) are enriched in low complexity. Residues 350–378 (PASPTSTAATPTQQQPTSSCSTNSGSSLD) form a disordered region. The C4-type zinc finger occupies 739 to 777 (LSCNFCGKSVSNALLDEPRPRSTTTSTNRLSSCPSCRKP). The Zn(2+) site is built by Cys741, Cys744, Cys771, Cys774, Cys784, Cys821, Cys824, His826, His829, His832, Cys843, Cys848, and Cys852. The RING-type; atypical zinc finger occupies 778–857 (LPRCSLCLMH…CNCRCFDMDG (80 aa)).

It belongs to the WD repeat mio family. Component of the GATOR complex consisting of mio, Nup44A/Seh1, Im11, Nplr3, Nplr2, Wdr24, Wdr59 and Sec13. Within the GATOR complex, probable component of the GATOR2 subcomplex which is likely composed of mio, Nup44A/Seh1, Wdr24, Wdr59 and Sec13. Interacts with Wdr24. Interacts with nucleoporin Nup44A/Seh1. The GATOR2 complex associates with unmet in the absence of S-adenosyl-L-methionine; the mio-Wdr24-Nup44A subcomplex is essential and sufficient for this interaction while Wdr59 and Sec13 are dispensable. This association acts as a nutrient sensor to inhibit mTORC1 signaling in the absence of methionine. In terms of tissue distribution, present in the oocyte.

It localises to the nucleus. The protein localises to the lysosome. Functionally, an essential component of the GATOR subcomplex GATOR2 which functions as an activator of the amino acid-sensing branch of the mTORC1 signaling pathway. The two GATOR subcomplexes, GATOR1 and GATOR2, regulate the mTORC1 pathway in order to mediate metabolic homeostasis, female gametogenesis and the response to amino acid limitation and complete starvation. GATOR2 activates the mTORC1 signaling pathway through the inhibition of the GATOR1 subcomplex, controlling the switch to cell proliferation and growth under nutrient replete conditions and during female oocyte development. This component is required for activating mTORC1 specifically in germline cells to promote cell growth and maintain the oocyte fate. GATOR1 and GATOR2 act at different stages of oogenesis to regulate mTORC1 in order to control meiotic entry and promote oocyte growth and development. After exactly four mitotic cyst divisions, the GATOR1 complex members (Iml1, Nprl2 and Nprl3) down-regulate mTORC1 to slow cellular metabolism and promote the mitotic/meiotic transition. At later stages of oogenesis, the mio and Nup44A components of the GATOR2 complex inhibit GATOR1 and thus activate mTORC1 to promote meiotic progression, and drive oocyte growth and development. In addition to its role in the regulation of the mTORC1 complex, functions independently of mTORC1 to prevent the inappropriate accumulation of autolysosomes in germline tissues. This Drosophila melanogaster (Fruit fly) protein is GATOR2 complex protein Mio.